Here is a 471-residue protein sequence, read N- to C-terminus: Cysteine--tRNA ligase (471 aa).

Cys29 contributes to the Zn(2+) binding site. The 'HIGH' region motif lies at 31-41; it reads LTVQSEPHVGH. 3 residues coordinate Zn(2+): Cys215, His240, and Glu244. The short motif at 271-275 is the 'KMSKS' region element; that stretch reads KMSKS. Lys274 is a binding site for ATP.

Belongs to the class-I aminoacyl-tRNA synthetase family. Monomer. It depends on Zn(2+) as a cofactor.

It localises to the cytoplasm. The catalysed reaction is tRNA(Cys) + L-cysteine + ATP = L-cysteinyl-tRNA(Cys) + AMP + diphosphate. The protein is Cysteine--tRNA ligase of Nocardioides sp. (strain ATCC BAA-499 / JS614).